Here is a 101-residue protein sequence, read N- to C-terminus: NADH-quinone oxidoreductase subunit K (101 aa).

A run of 3 helical transmembrane segments spans residues 2–22 (ISLN…LVGV), 29–49 (IMLF…LVAI), and 63–83 (MFII…LILW).

This sequence belongs to the complex I subunit 4L family. As to quaternary structure, NDH-1 is composed of 14 different subunits. Subunits NuoA, H, J, K, L, M, N constitute the membrane sector of the complex.

It is found in the cell inner membrane. It carries out the reaction a quinone + NADH + 5 H(+)(in) = a quinol + NAD(+) + 4 H(+)(out). Its function is as follows. NDH-1 shuttles electrons from NADH, via FMN and iron-sulfur (Fe-S) centers, to quinones in the respiratory chain. The immediate electron acceptor for the enzyme in this species is believed to be ubiquinone. Couples the redox reaction to proton translocation (for every two electrons transferred, four hydrogen ions are translocated across the cytoplasmic membrane), and thus conserves the redox energy in a proton gradient. This is NADH-quinone oxidoreductase subunit K from Campylobacter hominis (strain ATCC BAA-381 / DSM 21671 / CCUG 45161 / LMG 19568 / NCTC 13146 / CH001A).